A 520-amino-acid chain; its full sequence is Laccase (520 aa).

Residues 1-21 form the signal peptide; that stretch reads MHTFLRSTALVVAGLSARALA. Plastocyanin-like domains follow at residues 22 to 148 and 160 to 304; these read SIGP…FVVY and VDDD…ILRY. A glycan (N-linked (GlcNAc...) asparagine) is linked at asparagine 75. 4 residues coordinate Cu cation: histidine 85, histidine 87, histidine 130, and histidine 132. 2 disulfide bridges follow: cysteine 106–cysteine 509 and cysteine 138–cysteine 227. 2 N-linked (GlcNAc...) asparagine glycosylation sites follow: asparagine 352 and asparagine 402. Positions 373 to 496 constitute a Plastocyanin-like 3 domain; sequence TVPVLLQILS…VFAEDIPDVA (124 aa). Histidine 418, histidine 421, histidine 423, histidine 473, cysteine 474, histidine 475, and histidine 479 together coordinate Cu cation.

Belongs to the multicopper oxidase family. Cu cation serves as cofactor.

It localises to the secreted. The catalysed reaction is 4 hydroquinone + O2 = 4 benzosemiquinone + 2 H2O. Its function is as follows. Lignin degradation and detoxification of lignin-derived products. This chain is Laccase (LAC), found in Phlebia radiata (White-rot fungus).